The primary structure comprises 452 residues: 3-phosphoshikimate 1-carboxyvinyltransferase (452 aa).

A disordered region spans residues 1–23; it reads MLNGSASKPATARKSAGLTGSVR. Lys-28, Ser-29, and Arg-33 together coordinate 3-phosphoshikimate. Lys-28 contacts phosphoenolpyruvate. Gly-100 and Arg-128 together coordinate phosphoenolpyruvate. Residues Ser-173, Gln-175, Asp-326, and Lys-353 each coordinate 3-phosphoshikimate. Gln-175 is a phosphoenolpyruvate binding site. Catalysis depends on Asp-326, which acts as the Proton acceptor. The phosphoenolpyruvate site is built by Arg-357 and Arg-405.

It belongs to the EPSP synthase family. Monomer.

Its subcellular location is the cytoplasm. The enzyme catalyses 3-phosphoshikimate + phosphoenolpyruvate = 5-O-(1-carboxyvinyl)-3-phosphoshikimate + phosphate. Its pathway is metabolic intermediate biosynthesis; chorismate biosynthesis; chorismate from D-erythrose 4-phosphate and phosphoenolpyruvate: step 6/7. Its function is as follows. Catalyzes the transfer of the enolpyruvyl moiety of phosphoenolpyruvate (PEP) to the 5-hydroxyl of shikimate-3-phosphate (S3P) to produce enolpyruvyl shikimate-3-phosphate and inorganic phosphate. This Rhizobium johnstonii (strain DSM 114642 / LMG 32736 / 3841) (Rhizobium leguminosarum bv. viciae) protein is 3-phosphoshikimate 1-carboxyvinyltransferase.